The chain runs to 967 residues: Isoleucine--tRNA ligase 2 (967 aa).

A 'HIGH' region motif is present at residues 58–68 (PYANGDIHIGH). The disordered stretch occupies residues 430 to 463 (EADPGRADVTEEAGATGEARKVGKAEEAEEAGPV). Glu598 contributes to the L-isoleucyl-5'-AMP binding site. Positions 639–643 (KMSKS) match the 'KMSKS' region motif. Lys642 is an ATP binding site. Cys922, Cys925, Cys942, and Cys945 together coordinate Zn(2+).

Belongs to the class-I aminoacyl-tRNA synthetase family. IleS type 1 subfamily. In terms of assembly, monomer. Zn(2+) serves as cofactor.

Its subcellular location is the cytoplasm. The catalysed reaction is tRNA(Ile) + L-isoleucine + ATP = L-isoleucyl-tRNA(Ile) + AMP + diphosphate. Catalyzes the attachment of isoleucine to tRNA(Ile). As IleRS can inadvertently accommodate and process structurally similar amino acids such as valine, to avoid such errors it has two additional distinct tRNA(Ile)-dependent editing activities. One activity is designated as 'pretransfer' editing and involves the hydrolysis of activated Val-AMP. The other activity is designated 'posttransfer' editing and involves deacylation of mischarged Val-tRNA(Ile). The chain is Isoleucine--tRNA ligase 2 from Burkholderia pseudomallei (strain K96243).